Consider the following 349-residue polypeptide: Hypoxia-inducible factor 1-alpha inhibitor (349 aa).

Residues 1–10 (MAATAAEAVA) are compositionally biased toward low complexity. Positions 1-51 (MAATAAEAVASGSGEPREEAGALGPAWDESQLRSYSFPTRPIPRLSQSDPR) are disordered. Ala-2 carries the N-acetylalanine modification. An interaction with VHL region spans residues 2-125 (AATAAEAVAS…PRSNREEMKF (124 aa)). The JmjC domain occupies 142 to 312 (ERLYLQQTLN…PKRIEYPLKA (171 aa)). Tyr-145 lines the 2-oxoglutarate pocket. Residues Asp-152 and 181 to 183 (QLT) contribute to the substrate site. Thr-196 provides a ligand contact to 2-oxoglutarate. Positions 199 and 201 each coordinate Fe cation. Position 201 to 203 (201 to 203 (DEQ)) interacts with substrate. 2 residues coordinate 2-oxoglutarate: Asn-205 and Lys-214. 238–239 (RQ) lines the substrate pocket. His-279 contributes to the Fe cation binding site. Asn-294 serves as a coordination point for 2-oxoglutarate. Ala-300 and Asn-321 together coordinate substrate.

In terms of assembly, homodimer; homodimerization is essential for catalytic activity. Interacts with VHL and HIF1A. Part of a complex with VHL, HIF1A and HDAC1 or HDAC2 or HDAC3. Interacts with NFKB1 and NFKBIA. Interacts with NOTCH1, NOTCH2 and NOTCH3 but not with NOTCH4. Interacts with APBA3; binding inhibits HIF1AN binding to HIF1A. Interacts with TNKS2. Interacts with PPP1R12A. Interacts with ASB4. Interacts with UBE3A. Interacts with ANKS3. Interacts with NECAB3; the interaction is indirect and seems to be mediated by APBA3. It depends on Fe(2+) as a cofactor.

Its subcellular location is the nucleus. It localises to the cytoplasm. The protein resides in the perinuclear region. It catalyses the reaction L-asparaginyl-[hypoxia-inducible factor alpha subunit] + 2-oxoglutarate + O2 = (3S)-3-hydroxy-L-asparaginyl-[hypoxia-inducible factor alpha subunit] + succinate + CO2. The catalysed reaction is L-histidyl-[ankyrin-repeat domain protein] + 2-oxoglutarate + O2 = (3S)-3-hydroxy-L-histidyl-[ankyrin-repeat domain protein] + succinate + CO2. It carries out the reaction L-asparaginyl-[ankyrin-repeat domain protein] + 2-oxoglutarate + O2 = (3S)-3-hydroxy-L-asparaginyl-[ankyrin-repeat domain protein] + succinate + CO2. The enzyme catalyses L-aspartyl-[ankyrin-repeat domain protein] + 2-oxoglutarate + O2 = (3S)-3-hydroxy-L-aspartyl-[ankyrin-repeat domain protein] + succinate + CO2. Its function is as follows. Hydroxylates HIF-1 alpha at 'Asn-803' in the C-terminal transactivation domain (CAD). Functions as an oxygen sensor and, under normoxic conditions, the hydroxylation prevents interaction of HIF-1 with transcriptional coactivators including Cbp/p300-interacting transactivator. Involved in transcriptional repression through interaction with HIF1A, VHL and histone deacetylases. Hydroxylates specific Asn residues within ankyrin repeat domains (ARD) of NFKB1, NFKBIA, NOTCH1, ASB4, PPP1R12A and several other ARD-containing proteins. Also hydroxylates Asp and His residues within ARDs of ANK1 and TNKS2, respectively. Negatively regulates NOTCH1 activity, accelerating myogenic differentiation. Positively regulates ASB4 activity, promoting vascular differentiation. This Homo sapiens (Human) protein is Hypoxia-inducible factor 1-alpha inhibitor (HIF1AN).